A 195-amino-acid polypeptide reads, in one-letter code: 3-isopropylmalate dehydratase small subunit (195 aa).

This sequence belongs to the LeuD family. LeuD type 1 subfamily. In terms of assembly, heterodimer of LeuC and LeuD.

The enzyme catalyses (2R,3S)-3-isopropylmalate = (2S)-2-isopropylmalate. It functions in the pathway amino-acid biosynthesis; L-leucine biosynthesis; L-leucine from 3-methyl-2-oxobutanoate: step 2/4. Catalyzes the isomerization between 2-isopropylmalate and 3-isopropylmalate, via the formation of 2-isopropylmaleate. This Frankia alni (strain DSM 45986 / CECT 9034 / ACN14a) protein is 3-isopropylmalate dehydratase small subunit.